Consider the following 721-residue polypeptide: MASNEASTSAAGSGPESAALFSKLRSFSIGSGPNSPQRVVSNLRGFLTHRLSNITPSDTGWKDSILSIPKKWLSTAESVDEFGFPDTLPKVPVPALDETMADYIRALEPITTPAQLERTKELIRQFSAPQGIGARLHQYLLDKREAEDNWAYYYWLNEMYMDIRIPLPINSNPGMVFPPRRFKTVHDVAHFAARLLDGILSHREMLDSGELPLERAASREKNQPLCMAQYYRLLGSCRRPGVKQDSQFLPSRERLNDEDRHVVVICRNQMYCVVLQASDRGKLSESEIASQILYVLSDAPCLPAKPVPVGLLTAEPRSTWARDREMLQEDERNQRNLELIETAQVVLCLDEPLAGNFNARGFTGATPTVHRAGDRDETNMAHEMIHGGGSEYNSGNRWFDKTMQLIICTDGTWGLCYEHSCSEGIAVVQLLEKIYKKIEEHPDEDNGLPQHHLPPPERLEWHVGPQLQLRFAQASKSVDKCIDDLDFYVYRYQSYGKTFIKSCQVSPDVYIQLALQLAHYKLYGRLVATYESASTRRFLHGRVDCIRAASTEALEWAKAMCQGEGANVPLESDREDEEESRKVKFSIYSKDHLRELFRCAVARQTEVMVKNILGNGIDIPLLGLREASIEVTGEMHELFKDESYIISQCFLLSTSQVACSTDSFMGYGPVTPRGYGCSYNPHPEQIVFCVSAFYSCEDTSASRYAKSLQDSLDIMRDLLQN.

The Proton acceptor role is filled by histidine 419. CoA contacts are provided by residues 496–508, serine 534, and glutamine 656; that span reads GKTF…VSPD.

Belongs to the carnitine/choline acetyltransferase family. The 54 kDa and 13 kDa chains exist as a heterodimer. Post-translationally, the N-terminus of choline O-acetyltransferase 67 kDa and 54 kDa chains are blocked.

It carries out the reaction choline + acetyl-CoA = acetylcholine + CoA. Catalyzes the reversible synthesis of acetylcholine (ACh) from acetyl CoA and choline at cholinergic synapses. The protein is Choline O-acetyltransferase of Drosophila melanogaster (Fruit fly).